The sequence spans 364 residues: Aminomethyltransferase (364 aa).

The protein belongs to the GcvT family. In terms of assembly, the glycine cleavage system is composed of four proteins: P, T, L and H.

The catalysed reaction is N(6)-[(R)-S(8)-aminomethyldihydrolipoyl]-L-lysyl-[protein] + (6S)-5,6,7,8-tetrahydrofolate = N(6)-[(R)-dihydrolipoyl]-L-lysyl-[protein] + (6R)-5,10-methylene-5,6,7,8-tetrahydrofolate + NH4(+). Its function is as follows. The glycine cleavage system catalyzes the degradation of glycine. In Shigella dysenteriae serotype 1 (strain Sd197), this protein is Aminomethyltransferase.